Reading from the N-terminus, the 656-residue chain is Threonine--tRNA ligase (656 aa).

The TGS domain occupies 1 to 63; that stretch reads MAEIQLTFPD…LEDGAIEIIT (63 aa). A catalytic region spans residues 243–541; it reads DHRVIGNQLD…LTEIYKGAFP (299 aa). Residues Cys337, His388, and His518 each contribute to the Zn(2+) site.

Belongs to the class-II aminoacyl-tRNA synthetase family. As to quaternary structure, homodimer. Requires Zn(2+) as cofactor.

The protein localises to the cytoplasm. The enzyme catalyses tRNA(Thr) + L-threonine + ATP = L-threonyl-tRNA(Thr) + AMP + diphosphate + H(+). Catalyzes the attachment of threonine to tRNA(Thr) in a two-step reaction: L-threonine is first activated by ATP to form Thr-AMP and then transferred to the acceptor end of tRNA(Thr). Also edits incorrectly charged L-seryl-tRNA(Thr). The protein is Threonine--tRNA ligase of Latilactobacillus sakei subsp. sakei (strain 23K) (Lactobacillus sakei subsp. sakei).